Consider the following 154-residue polypeptide: Putative nickel-responsive regulator (154 aa).

Ni(2+)-binding residues include H95, H106, H108, and C114.

This sequence belongs to the transcriptional regulatory CopG/NikR family. Ni(2+) is required as a cofactor.

Its function is as follows. Transcriptional regulator. In Caldanaerobacter subterraneus subsp. tengcongensis (strain DSM 15242 / JCM 11007 / NBRC 100824 / MB4) (Thermoanaerobacter tengcongensis), this protein is Putative nickel-responsive regulator.